A 357-amino-acid polypeptide reads, in one-letter code: Phospho-N-acetylmuramoyl-pentapeptide-transferase (357 aa).

The next 10 membrane-spanning stretches (helical) occupy residues 23 to 43, 70 to 90, 91 to 111, 127 to 147, 171 to 191, 196 to 216, 236 to 256, 260 to 280, 286 to 306, and 334 to 354; these read AIFS…YFIY, TMGG…YCNL, SNIY…IGFI, LKWK…MIKI, YLYI…VNLT, GLAI…SLFS, LAIL…FNSY, VFMG…IAIL, LLII…LQII, and LIIV…LISL.

This sequence belongs to the glycosyltransferase 4 family. MraY subfamily. The cofactor is Mg(2+).

Its subcellular location is the cell inner membrane. The catalysed reaction is UDP-N-acetyl-alpha-D-muramoyl-L-alanyl-gamma-D-glutamyl-meso-2,6-diaminopimeloyl-D-alanyl-D-alanine + di-trans,octa-cis-undecaprenyl phosphate = di-trans,octa-cis-undecaprenyl diphospho-N-acetyl-alpha-D-muramoyl-L-alanyl-D-glutamyl-meso-2,6-diaminopimeloyl-D-alanyl-D-alanine + UMP. The protein operates within cell wall biogenesis; peptidoglycan biosynthesis. Functionally, catalyzes the initial step of the lipid cycle reactions in the biosynthesis of the cell wall peptidoglycan: transfers peptidoglycan precursor phospho-MurNAc-pentapeptide from UDP-MurNAc-pentapeptide onto the lipid carrier undecaprenyl phosphate, yielding undecaprenyl-pyrophosphoryl-MurNAc-pentapeptide, known as lipid I. The sequence is that of Phospho-N-acetylmuramoyl-pentapeptide-transferase from Buchnera aphidicola subsp. Acyrthosiphon pisum (strain APS) (Acyrthosiphon pisum symbiotic bacterium).